The following is a 125-amino-acid chain: Large ribosomal subunit protein bL12 (125 aa).

The protein belongs to the bacterial ribosomal protein bL12 family. In terms of assembly, homodimer. Part of the ribosomal stalk of the 50S ribosomal subunit. Forms a multimeric L10(L12)X complex, where L10 forms an elongated spine to which 2 to 4 L12 dimers bind in a sequential fashion. Binds GTP-bound translation factors.

Functionally, forms part of the ribosomal stalk which helps the ribosome interact with GTP-bound translation factors. Is thus essential for accurate translation. This is Large ribosomal subunit protein bL12 from Helicobacter pylori (strain P12).